A 79-amino-acid chain; its full sequence is Putative defensin-like protein 274 (79 aa).

A signal peptide spans 1-23 (MASSRFQLVALLVVFSLVISITA). Disulfide bonds link cysteine 35-cysteine 76, cysteine 41-cysteine 64, cysteine 47-cysteine 74, and cysteine 51-cysteine 75.

It belongs to the DEFL family.

It localises to the secreted. This is Putative defensin-like protein 274 from Arabidopsis thaliana (Mouse-ear cress).